We begin with the raw amino-acid sequence, 442 residues long: Na(+)/H(+) antiporter NhaA (442 aa).

The next 11 membrane-spanning stretches (helical) occupy residues 32–52, 73–93, 111–131, 139–159, 170–190, 193–213, 234–254, 284–304, 316–336, 352–372, and 383–403; these read IGGG…NSPW, LTLA…VAGL, AVPV…YALV, AGWA…LAVI, FLLT…AVVY, HLSI…TLLV, VHAS…AVPV, VAVP…LSGL, VVLG…FLVA, VLGL…IGEL, and HVKI…AVVL. Residues 423-435 are compositionally biased toward basic and acidic residues; that stretch reads HDGIPDVYQDLHR. Residues 423 to 442 form a disordered region; the sequence is HDGIPDVYQDLHRSSPRPWG.

Belongs to the NhaA Na(+)/H(+) (TC 2.A.33) antiporter family.

Its subcellular location is the cell membrane. It carries out the reaction Na(+)(in) + 2 H(+)(out) = Na(+)(out) + 2 H(+)(in). Na(+)/H(+) antiporter that extrudes sodium in exchange for external protons. In Frankia casuarinae (strain DSM 45818 / CECT 9043 / HFP020203 / CcI3), this protein is Na(+)/H(+) antiporter NhaA.